The following is a 249-amino-acid chain: Isoprenyl transferase (249 aa).

Aspartate 29 is an active-site residue. Residue aspartate 29 coordinates Mg(2+). Substrate contacts are provided by residues 30-33 (GNGR), tryptophan 34, arginine 42, histidine 46, and 74-76 (STE). Residue asparagine 77 is the Proton acceptor of the active site. Substrate is bound by residues tryptophan 78, arginine 80, arginine 197, and 203–205 (RLS). Residue glutamate 216 participates in Mg(2+) binding.

It belongs to the UPP synthase family. Homodimer. The cofactor is Mg(2+).

Functionally, catalyzes the condensation of isopentenyl diphosphate (IPP) with allylic pyrophosphates generating different type of terpenoids. The polypeptide is Isoprenyl transferase (Gloeobacter violaceus (strain ATCC 29082 / PCC 7421)).